Consider the following 374-residue polypeptide: Quinolinate synthase (374 aa).

Iminosuccinate-binding residues include His53 and Ser70. Cys116 lines the [4Fe-4S] cluster pocket. Residues 148–150 (YMN) and Ser169 each bind iminosuccinate. Cys236 is a binding site for [4Fe-4S] cluster. Iminosuccinate contacts are provided by residues 262–264 (HPE) and Thr279. Position 327 (Cys327) interacts with [4Fe-4S] cluster.

It belongs to the quinolinate synthase family. Type 3 subfamily. [4Fe-4S] cluster serves as cofactor.

The protein resides in the cytoplasm. The catalysed reaction is iminosuccinate + dihydroxyacetone phosphate = quinolinate + phosphate + 2 H2O + H(+). The protein operates within cofactor biosynthesis; NAD(+) biosynthesis; quinolinate from iminoaspartate: step 1/1. In terms of biological role, catalyzes the condensation of iminoaspartate with dihydroxyacetone phosphate to form quinolinate. This chain is Quinolinate synthase, found in Halobacterium salinarum (strain ATCC 29341 / DSM 671 / R1).